A 669-amino-acid polypeptide reads, in one-letter code: Probable serine/threonine-protein kinase DDB_G0291918 (669 aa).

A Protein kinase domain is found at 13–360 (YNNIKELGRG…LKETLNHPFL (348 aa)). ATP-binding positions include 19–27 (LGRGVSGVV) and Lys-42. Catalysis depends on Asp-141, which acts as the Proton acceptor. Residues 396 to 405 (QNQQQQQQQQ) are compositionally biased toward low complexity. 2 disordered regions span residues 396–518 (QNQQ…APTF) and 530–550 (FPKLLPPPTKDAPPLETMNWR). Polar residues predominate over residues 406–418 (KSFSTSSLPQVNH). Composition is skewed to low complexity over residues 419 to 449 (NNDTNNNNNNNNNNNNNNNNNNNNNNNNNNN) and 457 to 494 (QSNNSSSSSSSSSPPSPTISKSSPSSLSSSLSPSSSTD).

Belongs to the protein kinase superfamily. Ser/Thr protein kinase family.

It carries out the reaction L-seryl-[protein] + ATP = O-phospho-L-seryl-[protein] + ADP + H(+). The catalysed reaction is L-threonyl-[protein] + ATP = O-phospho-L-threonyl-[protein] + ADP + H(+). In Dictyostelium discoideum (Social amoeba), this protein is Probable serine/threonine-protein kinase DDB_G0291918.